The following is a 250-amino-acid chain: UPF0524 protein C3orf70 (250 aa).

Residues 201–250 are disordered; it reads ESCDEDTEEGAELSSEEDYSPESSWEPDECTLLSPSQSDLEVIETIETTV. Over residues 202–229 the composition is skewed to acidic residues; sequence SCDEDTEEGAELSSEEDYSPESSWEPDE.

This sequence belongs to the UPF0524 family.

In terms of biological role, may play a role in neuronal and neurobehavioral development. The chain is UPF0524 protein C3orf70 (C3orf70) from Homo sapiens (Human).